The following is a 338-amino-acid chain: tRNA N6-adenosine threonylcarbamoyltransferase (338 aa).

2 residues coordinate Fe cation: His111 and His115. Residues 134 to 138, Asp167, Gly180, and Asn275 contribute to the substrate site; that span reads LLSGG. Residue Asp304 coordinates Fe cation.

Belongs to the KAE1 / TsaD family. Fe(2+) serves as cofactor.

Its subcellular location is the cytoplasm. The catalysed reaction is L-threonylcarbamoyladenylate + adenosine(37) in tRNA = N(6)-L-threonylcarbamoyladenosine(37) in tRNA + AMP + H(+). Its function is as follows. Required for the formation of a threonylcarbamoyl group on adenosine at position 37 (t(6)A37) in tRNAs that read codons beginning with adenine. Is involved in the transfer of the threonylcarbamoyl moiety of threonylcarbamoyl-AMP (TC-AMP) to the N6 group of A37, together with TsaE and TsaB. TsaD likely plays a direct catalytic role in this reaction. The protein is tRNA N6-adenosine threonylcarbamoyltransferase of Leptospira interrogans serogroup Icterohaemorrhagiae serovar copenhageni (strain Fiocruz L1-130).